A 109-amino-acid chain; its full sequence is Probable gas vesicle protein J1 (109 aa).

This sequence belongs to the gas vesicle GvpA family. In terms of assembly, interacts with GvpA.

It localises to the gas vesicle. In terms of biological role, a minor component of the gas vesicle, might be involved in nucleating gas vesicle formation. Gas vesicles (GV) are hollow, gas filled proteinaceous nanostructures. It is not clear what function GVs perform in soil bacteria. This chain is Probable gas vesicle protein J1 (gvpJ1), found in Streptomyces coelicolor (strain ATCC BAA-471 / A3(2) / M145).